A 388-amino-acid polypeptide reads, in one-letter code: Xylose isomerase (388 aa).

Residues His54 and Asp57 contribute to the active site. 7 residues coordinate Mg(2+): Glu181, Glu217, His220, Asp245, Asp255, Asp257, and Asp287.

It belongs to the xylose isomerase family. In terms of assembly, homotetramer. Mg(2+) is required as a cofactor.

It is found in the cytoplasm. The catalysed reaction is alpha-D-xylose = alpha-D-xylulofuranose. In terms of biological role, involved in D-xylose catabolism. The polypeptide is Xylose isomerase (xylA) (Streptomyces murinus).